A 1183-amino-acid polypeptide reads, in one-letter code: DNA-directed RNA polymerase subunit beta (1183 aa).

Belongs to the RNA polymerase beta chain family. The RNAP catalytic core consists of 2 alpha, 1 beta, 1 beta' and 1 omega subunit. When a sigma factor is associated with the core the holoenzyme is formed, which can initiate transcription.

It carries out the reaction RNA(n) + a ribonucleoside 5'-triphosphate = RNA(n+1) + diphosphate. DNA-dependent RNA polymerase catalyzes the transcription of DNA into RNA using the four ribonucleoside triphosphates as substrates. In Staphylococcus aureus (strain JH9), this protein is DNA-directed RNA polymerase subunit beta.